A 325-amino-acid polypeptide reads, in one-letter code: Tagatose 1,6-diphosphate aldolase 1 (325 aa).

It belongs to the aldolase LacD family.

It carries out the reaction D-tagatofuranose 1,6-bisphosphate = D-glyceraldehyde 3-phosphate + dihydroxyacetone phosphate. It functions in the pathway carbohydrate metabolism; D-tagatose 6-phosphate degradation; D-glyceraldehyde 3-phosphate and glycerone phosphate from D-tagatose 6-phosphate: step 2/2. This chain is Tagatose 1,6-diphosphate aldolase 1 (lacD1), found in Streptococcus pyogenes serotype M1.